Reading from the N-terminus, the 670-residue chain is Transketolase (670 aa).

His-31 lines the substrate pocket. Thiamine diphosphate is bound by residues His-71 and 120–122 (GPL). A Mg(2+)-binding site is contributed by Asp-161. The thiamine diphosphate site is built by Gly-162 and Asn-191. Mg(2+)-binding residues include Asn-191 and Ile-193. The substrate site is built by His-268, Arg-362, and Ser-389. His-268 lines the thiamine diphosphate pocket. Glu-416 functions as the Proton donor in the catalytic mechanism. Phe-443 is a binding site for thiamine diphosphate. The substrate site is built by His-467, Asp-475, and Arg-528.

In terms of assembly, homodimer. The cofactor is Mg(2+). It depends on Ca(2+) as a cofactor. Mn(2+) serves as cofactor. Co(2+) is required as a cofactor. Requires thiamine diphosphate as cofactor.

The catalysed reaction is D-sedoheptulose 7-phosphate + D-glyceraldehyde 3-phosphate = aldehydo-D-ribose 5-phosphate + D-xylulose 5-phosphate. In terms of biological role, catalyzes the transfer of a two-carbon ketol group from a ketose donor to an aldose acceptor, via a covalent intermediate with the cofactor thiamine pyrophosphate. The protein is Transketolase (tkt) of Nostoc sp. (strain PCC 7120 / SAG 25.82 / UTEX 2576).